A 789-amino-acid polypeptide reads, in one-letter code: MARGTFERTKKLREESINAEPHISIERAVLMTEAYKKYEGSVEIPVLRALSFKHYIENRTLSINDGELIVGEKGDSPNGAPTYPEICCHTMEDLEVMHNRDIINFSVSEEARKIHKEEIIPFWKKRQTRDKIINAMTPEWLAAYEAGMFTEFMEQRAPGHTVCGDTIYKKGFLDLKKDIEARLKELDFLNDLDAYNKKADLEAMAIACDAMVILGKRYAEKARQMAEEETDEAKKKDLLLIAETCDVVPAHKPETYHQAIQMYWFVHIGVTTELNIWDAFTPGRLDQHLNPFYERDVENGILDRDRAQELLECLWVKFNNQPAPPKVGITLKESSTYTDFANINTGGINPDGQDGVNEVSYIILDVMDEMKLIQPSSNVQISKKTPQKFLKRACEISRKGWGQPAFYNTEAIVQELMEAGKTIEDARLGGTSGCVETGCFGKEAYVLTGYMNIPKILELTLNNGYDPISKKQIGIETGDPRNFQSYEELFEAFKKQLHYMIDIKIEGNAVIENICAKHMPCPLMSTIVDDCIEKGKDYQRGGARYNTRYIQGVGIGTITDSLTAIKYNVFDKKKFDMDTLLKALDANFEGYEAILNLVSNKTPKYGNDDDYADEIMQEIFNAYYNEVTGRPTVCGGEYRVDMLPTTCHIYFGEIMGASPNGRLCAKPVSEGISPEKGGDTNGPTAVIKSCAKMDHIKTGGTLLNQRFAPSVVQGEKGLDNMANLVRAYFNMDGHHIQFNVFDKNVLLEAQKNPQDYKDLIVRVAGYSDHFNNLSRTLQDEIIGRTEQTF.

The PFL domain maps to 7 to 663 (ERTKKLREES…IMGASPNGRL (657 aa)). Catalysis depends on C434, which acts as the Cysteine radical intermediate. E436 serves as the catalytic Proton acceptor. The Glycine radical domain occupies 670 to 789 (EGISPEKGGD…EIIGRTEQTF (120 aa)). G765 bears the Glycine radical mark.

Belongs to the glycyl radical enzyme (GRE) family. HYPD subfamily. In terms of processing, requires the activating protein PflE to generate the key active site glycyl radical on Gly-765 that is involved in catalysis.

It carries out the reaction trans-4-hydroxy-L-proline = (S)-1-pyrroline-5-carboxylate + H2O + H(+). Glycine radical enzyme that catalyzes the dehydration of the non-proteinogenic amino acid trans-4-hydroxy-L-proline (Hyp) to produce delta(1)-pyrroline-5-carboxylate (P5C). Is involved in the anaerobic degradation of 4-hydroxyproline. The sequence is that of Trans-4-hydroxy-L-proline dehydratase from Clostridioides difficile (Peptoclostridium difficile).